The following is a 151-amino-acid chain: Probable cyclic pyranopterin monophosphate synthase (151 aa).

Substrate is bound by residues 66-68 (MCH) and 102-103 (ME). Residue D117 is part of the active site.

The protein belongs to the MoaC family. In terms of assembly, homohexamer; trimer of dimers.

The catalysed reaction is (8S)-3',8-cyclo-7,8-dihydroguanosine 5'-triphosphate = cyclic pyranopterin phosphate + diphosphate. The protein operates within cofactor biosynthesis; molybdopterin biosynthesis. Its function is as follows. Catalyzes the conversion of (8S)-3',8-cyclo-7,8-dihydroguanosine 5'-triphosphate to cyclic pyranopterin monophosphate (cPMP). The polypeptide is Probable cyclic pyranopterin monophosphate synthase (Sulfurisphaera tokodaii (strain DSM 16993 / JCM 10545 / NBRC 100140 / 7) (Sulfolobus tokodaii)).